Consider the following 309-residue polypeptide: Probable manganese-dependent inorganic pyrophosphatase (309 aa).

Positions 9, 13, 15, 75, 97, and 149 each coordinate Mn(2+).

The protein belongs to the PPase class C family. Mn(2+) serves as cofactor.

The protein localises to the cytoplasm. The enzyme catalyses diphosphate + H2O = 2 phosphate + H(+). This Bacillus cereus (strain G9842) protein is Probable manganese-dependent inorganic pyrophosphatase.